A 1180-amino-acid chain; its full sequence is DNA-directed RNA polymerase subunit beta (1180 aa).

Residues 1154 to 1164 (EMKELDDEDEQ) are compositionally biased toward acidic residues. The segment at 1154–1180 (EMKELDDEDEQASDKLNLNIDSTESNV) is disordered. The segment covering 1167-1180 (DKLNLNIDSTESNV) has biased composition (polar residues).

This sequence belongs to the RNA polymerase beta chain family. The RNAP catalytic core consists of 2 alpha, 1 beta, 1 beta' and 1 omega subunit. When a sigma factor is associated with the core the holoenzyme is formed, which can initiate transcription.

It carries out the reaction RNA(n) + a ribonucleoside 5'-triphosphate = RNA(n+1) + diphosphate. Functionally, DNA-dependent RNA polymerase catalyzes the transcription of DNA into RNA using the four ribonucleoside triphosphates as substrates. This is DNA-directed RNA polymerase subunit beta from Halalkalibacterium halodurans (strain ATCC BAA-125 / DSM 18197 / FERM 7344 / JCM 9153 / C-125) (Bacillus halodurans).